Here is a 95-residue protein sequence, read N- to C-terminus: Protein TusB (95 aa).

It belongs to the DsrH/TusB family. In terms of assembly, heterohexamer, formed by a dimer of trimers. The hexameric TusBCD complex contains 2 copies each of TusB, TusC and TusD. The TusBCD complex interacts with TusE.

The protein localises to the cytoplasm. Its function is as follows. Part of a sulfur-relay system required for 2-thiolation of 5-methylaminomethyl-2-thiouridine (mnm(5)s(2)U) at tRNA wobble positions. The chain is Protein TusB from Escherichia coli O157:H7.